Consider the following 60-residue polypeptide: ATP synthase subunit J, mitochondrial (60 aa).

The helical transmembrane segment at 13-32 threads the bilayer; that stretch reads ILKPMLPFFLGGAIVFYGTV.

Belongs to the ATPase j subunit family. In terms of assembly, F-type ATPases have 2 components, CF(1) - the catalytic core - and CF(0) - the membrane proton channel. In yeast, the dimeric form of ATP synthase consists of 17 polypeptides: alpha, beta, gamma, delta, epsilon, 4 (B), 5 (OSCP), 6 (A), 8, 9 (C), d, E (Tim11), f, g, h, i/j and k.

The protein resides in the mitochondrion membrane. Functionally, mitochondrial membrane ATP synthase (F(1)F(0) ATP synthase or Complex V) produces ATP from ADP in the presence of a proton gradient across the membrane which is generated by electron transport complexes of the respiratory chain. F-type ATPases consist of two structural domains, F(1) - containing the extramembraneous catalytic core and F(0) - containing the membrane proton channel, linked together by a central stalk and a peripheral stalk. During catalysis, ATP synthesis in the catalytic domain of F(1) is coupled via a rotary mechanism of the central stalk subunits to proton translocation. Part of the complex F(0) domain. Minor subunit located with subunit a in the membrane. The sequence is that of ATP synthase subunit J, mitochondrial (atp18) from Schizosaccharomyces pombe (strain 972 / ATCC 24843) (Fission yeast).